The primary structure comprises 411 residues: Citrate synthase (411 aa).

Residues histidine 304 and aspartate 363 contribute to the active site.

This sequence belongs to the citrate synthase family.

The enzyme catalyses oxaloacetate + acetyl-CoA + H2O = citrate + CoA + H(+). Its pathway is carbohydrate metabolism; tricarboxylic acid cycle; isocitrate from oxaloacetate: step 1/2. This Rickettsia helvetica protein is Citrate synthase (gltA).